A 310-amino-acid polypeptide reads, in one-letter code: p-hydroxybenzoic acid efflux pump subunit AaeA (310 aa).

Residues 12–32 (AITLVLVILAFIAIFRAWVYY) traverse the membrane as a helical segment.

It belongs to the membrane fusion protein (MFP) (TC 8.A.1) family.

Its subcellular location is the cell inner membrane. Functionally, forms an efflux pump with AaeB. This Salmonella arizonae (strain ATCC BAA-731 / CDC346-86 / RSK2980) protein is p-hydroxybenzoic acid efflux pump subunit AaeA.